We begin with the raw amino-acid sequence, 76 residues long: Sec-independent protein translocase protein TatA (76 aa).

The helical transmembrane segment at 1–21 (MGSFSIWHWLIVLVIVMLIFG) threads the bilayer. A disordered region spans residues 47–76 (NADKPAEEAQPTQQVGGHTIDVEVKEKTKS). The segment covering 66–76 (IDVEVKEKTKS) has biased composition (basic and acidic residues).

It belongs to the TatA/E family. In terms of assembly, the Tat system comprises two distinct complexes: a TatABC complex, containing multiple copies of TatA, TatB and TatC subunits, and a separate TatA complex, containing only TatA subunits. Substrates initially bind to the TatABC complex, which probably triggers association of the separate TatA complex to form the active translocon.

It localises to the cell inner membrane. Part of the twin-arginine translocation (Tat) system that transports large folded proteins containing a characteristic twin-arginine motif in their signal peptide across membranes. TatA could form the protein-conducting channel of the Tat system. The chain is Sec-independent protein translocase protein TatA from Dechloromonas aromatica (strain RCB).